We begin with the raw amino-acid sequence, 1139 residues long: Autophagy-related protein 23 (1139 aa).

Disordered stretches follow at residues 1 to 148 (MFQR…EMSP), 225 to 327 (STDK…YDDE), 356 to 388 (LTTARETSTGLVESLENATRELSKTRDVASVKD), 475 to 569 (KNEK…DTAG), 648 to 674 (KKISSSTSDAEASSKMQSEMESIKTEY), 720 to 767 (RQES…RETE), 786 to 828 (EDAQ…SKLR), 935 to 961 (AAVEERDRIEDESATLARRKTRETEDL), and 977 to 1012 (HERDELEQREKEWRKRREELESVEEKAEAETDELRT). A compositionally biased stretch (basic and acidic residues) spans 7-18 (SAIDRTIAEEQA). Positions 19-37 (RQQTATQSRSPSRTGSTSS) are enriched in low complexity. Coiled-coil stretches lie at residues 142 to 170 (KLQEMSPEIRQKLRKLEKLEATYPELLRS) and 215 to 259 (DMVM…STDQ). Basic and acidic residues-rich tracts occupy residues 225 to 247 (STDKDELQKKYNEAEEKAKKLEE), 261 to 273 (KTSDSETSKDAQD), 373 to 385 (ATRELSKTRDVAS), and 475 to 494 (KNEKSDSQTKITDLTKKLES). Residues 323–495 (SYDDEIPQLQ…TDLTKKLESK (173 aa)) are a coiled coil. Over residues 496-522 (PAPAMLTPAATPMPTVLQPAATSATAA) the composition is skewed to low complexity. Residues 526-537 (GKKKNNKKKKGK) show a composition bias toward basic residues. The stretch at 566–1067 (DTAGNAELKA…AAQTKLVASS (502 aa)) forms a coiled coil. Over residues 651–661 (SSSTSDAEASS) the composition is skewed to low complexity. Basic and acidic residues-rich tracts occupy residues 728-767 (ATKEELANKTKELRDMEKREKDLKRDVERAQKISSDRETE), 786-815 (EDAQRVSGRDLRRSEAEKVEISGRADKAEQ), 935-945 (AAVEERDRIED), and 977-1011 (HERDELEQREKEWRKRREELESVEEKAEAETDELR). Residues 1082–1132 (SPAGAPDTVYLKTILLQFLEQKDTKLRAQLVPVLGKLLRFDKTDEQKWQKA) enclose the GRIP domain.

It belongs to the ATG23 family. Forms a complex with ATG9 and ATG27.

Its subcellular location is the cytoplasm. The protein resides in the preautophagosomal structure membrane. In terms of biological role, required for cytoplasm to vacuole transport (Cvt) vesicle formation and efficient autophagy. Plays a role in ATG protein retrieval from the pre-autophagosomal structure (PAS) and is especially required for autophagy-dependent cycling of ATG9. Autophagy is required for proper vegetative growth, asexual/sexual reproduction, and full virulence. Autophagy is particularly involved in the biosynthesis of deoxynivalenol (DON), an important virulence determinant. This Gibberella zeae (strain ATCC MYA-4620 / CBS 123657 / FGSC 9075 / NRRL 31084 / PH-1) (Wheat head blight fungus) protein is Autophagy-related protein 23.